Here is an 877-residue protein sequence, read N- to C-terminus: DNA polymerase I (877 aa).

Residues 180–272 (TPSQFIDLKA…GLEDTLLKEK (93 aa)) form the 5'-3' exonuclease domain. The 3'-5' exonuclease domain maps to 312 to 468 (FEIVTDKSSV…AKEKMMAELI (157 aa)).

This sequence belongs to the DNA polymerase type-A family. Single-chain monomer with multiple functions.

The enzyme catalyses DNA(n) + a 2'-deoxyribonucleoside 5'-triphosphate = DNA(n+1) + diphosphate. In addition to polymerase activity, this DNA polymerase exhibits 3'-5' and 5'-3' exonuclease activity. This Lactococcus lactis subsp. cremoris (strain MG1363) protein is DNA polymerase I (polA).